Here is a 183-residue protein sequence, read N- to C-terminus: Glutamyl-tRNA(Gln) amidotransferase subunit F, mitochondrial (183 aa).

A mitochondrion-targeting transit peptide spans 1 to 23 (MSRMLNQIPRLITRSFRTSSVGY).

Belongs to the GatF family. As to quaternary structure, subunit of the heterotrimeric GatFAB amidotransferase (AdT) complex, composed of A, B and F subunits.

It localises to the mitochondrion inner membrane. It catalyses the reaction L-glutamyl-tRNA(Gln) + L-glutamine + ATP + H2O = L-glutaminyl-tRNA(Gln) + L-glutamate + ADP + phosphate + H(+). Functionally, allows the formation of correctly charged Gln-tRNA(Gln) through the transamidation of misacylated Glu-tRNA(Gln) in the mitochondria. The reaction takes place in the presence of glutamine and ATP through an activated gamma-phospho-Glu-tRNA(Gln). Required for proper protein synthesis within the mitochondrion. This Debaryomyces hansenii (strain ATCC 36239 / CBS 767 / BCRC 21394 / JCM 1990 / NBRC 0083 / IGC 2968) (Yeast) protein is Glutamyl-tRNA(Gln) amidotransferase subunit F, mitochondrial.